We begin with the raw amino-acid sequence, 472 residues long: L-aspartate oxidase (472 aa).

FAD is bound by residues 7–10 (SGIA), serine 29, 36–37 (ST), 42–43 (GG), and aspartate 191. Residue arginine 257 is the Proton donor/acceptor of the active site. Residues glutamate 337 and 353 to 354 (SL) contribute to the FAD site.

It belongs to the FAD-dependent oxidoreductase 2 family. NadB subfamily. Monomer. The cofactor is FAD.

The protein localises to the cytoplasm. It catalyses the reaction L-aspartate + O2 = iminosuccinate + H2O2. Its pathway is cofactor biosynthesis; NAD(+) biosynthesis; iminoaspartate from L-aspartate (oxidase route): step 1/1. Catalyzes the oxidation of L-aspartate to iminoaspartate, the first step in the de novo biosynthesis of NAD(+). Can also use L-asparagine, but not L-phenylalanine, L-glutamate, glycine, L-proline, L-alanine and D-aspartate. This is L-aspartate oxidase from Sulfurisphaera tokodaii (strain DSM 16993 / JCM 10545 / NBRC 100140 / 7) (Sulfolobus tokodaii).